Reading from the N-terminus, the 259-residue chain is Type III pantothenate kinase (259 aa).

Position 6 to 13 (6 to 13 (DVGNTNCT)) interacts with ATP. 107 to 110 (GSDR) contributes to the substrate binding site. Aspartate 109 functions as the Proton acceptor in the catalytic mechanism. Aspartate 129 serves as a coordination point for K(+). Threonine 132 contributes to the ATP binding site. A substrate-binding site is contributed by threonine 184.

The protein belongs to the type III pantothenate kinase family. Homodimer. It depends on NH4(+) as a cofactor. Requires K(+) as cofactor.

Its subcellular location is the cytoplasm. The enzyme catalyses (R)-pantothenate + ATP = (R)-4'-phosphopantothenate + ADP + H(+). It functions in the pathway cofactor biosynthesis; coenzyme A biosynthesis; CoA from (R)-pantothenate: step 1/5. Its function is as follows. Catalyzes the phosphorylation of pantothenate (Pan), the first step in CoA biosynthesis. This Listeria innocua serovar 6a (strain ATCC BAA-680 / CLIP 11262) protein is Type III pantothenate kinase.